Here is a 477-residue protein sequence, read N- to C-terminus: UDP-N-acetylmuramate--L-alanine ligase (477 aa).

115-121 (GTHGKTT) serves as a coordination point for ATP.

This sequence belongs to the MurCDEF family.

The protein resides in the cytoplasm. It carries out the reaction UDP-N-acetyl-alpha-D-muramate + L-alanine + ATP = UDP-N-acetyl-alpha-D-muramoyl-L-alanine + ADP + phosphate + H(+). Its pathway is cell wall biogenesis; peptidoglycan biosynthesis. Cell wall formation. The polypeptide is UDP-N-acetylmuramate--L-alanine ligase (Gluconobacter oxydans (strain 621H) (Gluconobacter suboxydans)).